A 225-amino-acid polypeptide reads, in one-letter code: Phosphatidylserine decarboxylase proenzyme (225 aa).

Residue S189 is the Schiff-base intermediate with substrate; via pyruvic acid of the active site. The residue at position 189 (S189) is a Pyruvic acid (Ser); by autocatalysis.

This sequence belongs to the phosphatidylserine decarboxylase family. PSD-A subfamily. In terms of assembly, heterodimer of a large membrane-associated beta subunit and a small pyruvoyl-containing alpha subunit. It depends on pyruvate as a cofactor. In terms of processing, is synthesized initially as an inactive proenzyme. Formation of the active enzyme involves a self-maturation process in which the active site pyruvoyl group is generated from an internal serine residue via an autocatalytic post-translational modification. Two non-identical subunits are generated from the proenzyme in this reaction, and the pyruvate is formed at the N-terminus of the alpha chain, which is derived from the carboxyl end of the proenzyme. The post-translation cleavage follows an unusual pathway, termed non-hydrolytic serinolysis, in which the side chain hydroxyl group of the serine supplies its oxygen atom to form the C-terminus of the beta chain, while the remainder of the serine residue undergoes an oxidative deamination to produce ammonia and the pyruvoyl prosthetic group on the alpha chain.

It localises to the cell membrane. It catalyses the reaction a 1,2-diacyl-sn-glycero-3-phospho-L-serine + H(+) = a 1,2-diacyl-sn-glycero-3-phosphoethanolamine + CO2. It participates in phospholipid metabolism; phosphatidylethanolamine biosynthesis; phosphatidylethanolamine from CDP-diacylglycerol: step 2/2. Its function is as follows. Catalyzes the formation of phosphatidylethanolamine (PtdEtn) from phosphatidylserine (PtdSer). This Amoebophilus asiaticus (strain 5a2) protein is Phosphatidylserine decarboxylase proenzyme.